A 315-amino-acid chain; its full sequence is Glutathione synthetase (315 aa).

Residues 125–310 (KLFTAWFSDL…ITGMLMDAIE (186 aa)) form the ATP-grasp domain. 151–207 (WEKHSDIILKPLDGMGGASIFRVKEGDPNLGVIAETLTEHGTRYCMAQNYLPAIKDG) contacts ATP. Mg(2+) is bound by residues E281 and N283.

Belongs to the prokaryotic GSH synthase family. It depends on Mg(2+) as a cofactor. Mn(2+) is required as a cofactor.

The catalysed reaction is gamma-L-glutamyl-L-cysteine + glycine + ATP = glutathione + ADP + phosphate + H(+). It functions in the pathway sulfur metabolism; glutathione biosynthesis; glutathione from L-cysteine and L-glutamate: step 2/2. The chain is Glutathione synthetase from Escherichia coli O157:H7.